Here is a 691-residue protein sequence, read N- to C-terminus: Two-component response regulator ORR21 (691 aa).

Positions 17 to 132 constitute a Response regulatory domain; it reads KVLVVDDDPT…ELKNIWQHVI (116 aa). 4-aspartylphosphate is present on Asp68. The segment covering 139–155 has biased composition (basic and acidic residues); the sequence is NKEHEHSGSLDDTDRTR. Residues 139–204 are disordered; sequence NKEHEHSGSL…DPSSTSKKPR (66 aa). The segment at residues 199-258 is a DNA-binding region (myb-like GARP); that stretch reads TSKKPRVVWSVELHQQFVNAVNHLGIDKAVPKKILELMNVPGLTRENVASHLQKFRLYLK.

The protein belongs to the ARR family. Type-B subfamily. Two-component system major event consists of a His-to-Asp phosphorelay between a sensor histidine kinase (HK) and a response regulator (RR). In plants, the His-to-Asp phosphorelay involves an additional intermediate named Histidine-containing phosphotransfer protein (HPt). This multistep phosphorelay consists of a His-Asp-His-Asp sequential transfer of a phosphate group between first a His and an Asp of the HK protein, followed by the transfer to a conserved His of the HPt protein and finally the transfer to an Asp in the receiver domain of the RR protein.

It localises to the nucleus. Functionally, transcriptional activator that binds specific DNA sequence. Functions as a response regulator involved in His-to-Asp phosphorelay signal transduction system. Phosphorylation of the Asp residue in the receiver domain activates the ability of the protein to promote the transcription of target genes. May directly activate some type-A response regulators in response to cytokinins. In Oryza sativa subsp. japonica (Rice), this protein is Two-component response regulator ORR21.